Reading from the N-terminus, the 2296-residue chain is Protein Ycf2 (2296 aa).

Residue Gly1650–Ser1657 participates in ATP binding.

This sequence belongs to the Ycf2 family.

The protein localises to the plastid. Its subcellular location is the chloroplast stroma. Its function is as follows. Probable ATPase of unknown function. Its presence in a non-photosynthetic plant (Epifagus virginiana) and experiments in tobacco indicate that it has an essential function which is probably not related to photosynthesis. The polypeptide is Protein Ycf2 (Arabis hirsuta (Hairy rock-cress)).